The primary structure comprises 399 residues: Proteasome-activating nucleotidase (399 aa).

Residues 19 to 60 (ITYLKRRIRQLELQVRMLEADKERLERELSRLRSEMSRLRQP) adopt a coiled-coil conformation. ATP contacts are provided by residues 184–189 (GCGKTL) and His-323. The tract at residues 397 to 399 (IYG) is docks into pockets in the proteasome alpha-ring to cause gate opening.

The protein belongs to the AAA ATPase family. In terms of assembly, homohexamer. The hexameric complex has a two-ring architecture resembling a top hat that caps the 20S proteasome core at one or both ends. Upon ATP-binding, the C-terminus of PAN interacts with the alpha-rings of the proteasome core by binding to the intersubunit pockets.

It is found in the cytoplasm. Its function is as follows. ATPase which is responsible for recognizing, binding, unfolding and translocation of substrate proteins into the archaeal 20S proteasome core particle. Is essential for opening the gate of the 20S proteasome via an interaction with its C-terminus, thereby allowing substrate entry and access to the site of proteolysis. Thus, the C-termini of the proteasomal ATPase function like a 'key in a lock' to induce gate opening and therefore regulate proteolysis. Unfolding activity requires energy from ATP hydrolysis, whereas ATP binding alone promotes ATPase-20S proteasome association which triggers gate opening, and supports translocation of unfolded substrates. This chain is Proteasome-activating nucleotidase, found in Pyrococcus horikoshii (strain ATCC 700860 / DSM 12428 / JCM 9974 / NBRC 100139 / OT-3).